Here is a 318-residue protein sequence, read N- to C-terminus: tRNA-dihydrouridine(16) synthase (318 aa).

Residues Pro7–Glu9 and Gln68 contribute to the FMN site. The Proton donor role is filled by Cys98. Residues Lys139, Asn200–Glu202, and Cys224–Arg225 contribute to the FMN site.

The protein belongs to the Dus family. DusC subfamily. Requires FMN as cofactor.

It carries out the reaction 5,6-dihydrouridine(16) in tRNA + NADP(+) = uridine(16) in tRNA + NADPH + H(+). It catalyses the reaction 5,6-dihydrouridine(16) in tRNA + NAD(+) = uridine(16) in tRNA + NADH + H(+). Its function is as follows. Catalyzes the synthesis of 5,6-dihydrouridine (D), a modified base found in the D-loop of most tRNAs, via the reduction of the C5-C6 double bond in target uridines. Specifically modifies U16 in tRNAs. The protein is tRNA-dihydrouridine(16) synthase of Vibrio vulnificus (strain CMCP6).